The following is a 191-amino-acid chain: Putative glutathione-dependent formaldehyde-activating enzyme (191 aa).

In terms of domain architecture, CENP-V/GFA spans 20 to 166; the sequence is FSGGTLRCHC…FKSVGLETYD (147 aa). The Zn(2+) site is built by cysteine 27, cysteine 29, cysteine 48, cysteine 50, cysteine 53, cysteine 95, and cysteine 98.

The protein belongs to the Gfa family. Requires Zn(2+) as cofactor.

The catalysed reaction is S-(hydroxymethyl)glutathione = glutathione + formaldehyde. Its pathway is one-carbon metabolism; formaldehyde degradation; formate from formaldehyde (glutathione route): step 1/3. Functionally, catalyzes the condensation of formaldehyde and glutathione to S-hydroxymethylglutathione. In Colletotrichum graminicola (strain M1.001 / M2 / FGSC 10212) (Maize anthracnose fungus), this protein is Putative glutathione-dependent formaldehyde-activating enzyme.